The primary structure comprises 258 residues: Imidazole glycerol phosphate synthase subunit HisF (258 aa).

Active-site residues include Asp-11 and Asp-130.

Belongs to the HisA/HisF family. Heterodimer of HisH and HisF.

It is found in the cytoplasm. It carries out the reaction 5-[(5-phospho-1-deoxy-D-ribulos-1-ylimino)methylamino]-1-(5-phospho-beta-D-ribosyl)imidazole-4-carboxamide + L-glutamine = D-erythro-1-(imidazol-4-yl)glycerol 3-phosphate + 5-amino-1-(5-phospho-beta-D-ribosyl)imidazole-4-carboxamide + L-glutamate + H(+). It functions in the pathway amino-acid biosynthesis; L-histidine biosynthesis; L-histidine from 5-phospho-alpha-D-ribose 1-diphosphate: step 5/9. In terms of biological role, IGPS catalyzes the conversion of PRFAR and glutamine to IGP, AICAR and glutamate. The HisF subunit catalyzes the cyclization activity that produces IGP and AICAR from PRFAR using the ammonia provided by the HisH subunit. The chain is Imidazole glycerol phosphate synthase subunit HisF from Yersinia pseudotuberculosis serotype O:1b (strain IP 31758).